Here is a 783-residue protein sequence, read N- to C-terminus: Protein SCARECROW (783 aa).

The tract at residues Q298–A387 is disordered. Low complexity-rich tracts occupy residues P342 to S353 and E372 to E384. Residues A387–L418 are a coiled coil. Residues Q408 to R777 enclose the GRAS domain. The segment at L415–A478 is leucine repeat I (LRI). Residues L422–E426 carry the LxCxE motif motif. The tract at residues F497–G562 is VHIID. A VHIID motif is present at residues V528 to D532. The tract at residues A572–R604 is leucine repeat II (LRII). The segment at V613–N700 is PFYRE. Residues A703–R777 form an SAW region.

It belongs to the GRAS family.

The protein resides in the nucleus. In terms of biological role, putative transcription factor involved in asymmetric cell division. Required for differentiation of endodermis and graviresponses. This chain is Protein SCARECROW (SCR), found in Ipomoea nil (Japanese morning glory).